We begin with the raw amino-acid sequence, 341 residues long: Holliday junction branch migration complex subunit RuvB (341 aa).

Positions Thr4–Tyr185 are large ATPase domain (RuvB-L). Residues Leu24, Arg25, Gly66, Lys69, Thr70, Thr71, Glu132–Phe134, Arg175, Tyr185, and Arg222 contribute to the ATP site. Residue Thr70 coordinates Mg(2+). The segment at Ser186 to Asp256 is small ATPAse domain (RuvB-S). The segment at Arg259–Phe341 is head domain (RuvB-H). DNA-binding residues include Arg295, Arg314, and Arg319.

This sequence belongs to the RuvB family. As to quaternary structure, homohexamer. Forms an RuvA(8)-RuvB(12)-Holliday junction (HJ) complex. HJ DNA is sandwiched between 2 RuvA tetramers; dsDNA enters through RuvA and exits via RuvB. An RuvB hexamer assembles on each DNA strand where it exits the tetramer. Each RuvB hexamer is contacted by two RuvA subunits (via domain III) on 2 adjacent RuvB subunits; this complex drives branch migration. In the full resolvosome a probable DNA-RuvA(4)-RuvB(12)-RuvC(2) complex forms which resolves the HJ.

Its subcellular location is the cytoplasm. It carries out the reaction ATP + H2O = ADP + phosphate + H(+). The RuvA-RuvB-RuvC complex processes Holliday junction (HJ) DNA during genetic recombination and DNA repair, while the RuvA-RuvB complex plays an important role in the rescue of blocked DNA replication forks via replication fork reversal (RFR). RuvA specifically binds to HJ cruciform DNA, conferring on it an open structure. The RuvB hexamer acts as an ATP-dependent pump, pulling dsDNA into and through the RuvAB complex. RuvB forms 2 homohexamers on either side of HJ DNA bound by 1 or 2 RuvA tetramers; 4 subunits per hexamer contact DNA at a time. Coordinated motions by a converter formed by DNA-disengaged RuvB subunits stimulates ATP hydrolysis and nucleotide exchange. Immobilization of the converter enables RuvB to convert the ATP-contained energy into a lever motion, pulling 2 nucleotides of DNA out of the RuvA tetramer per ATP hydrolyzed, thus driving DNA branch migration. The RuvB motors rotate together with the DNA substrate, which together with the progressing nucleotide cycle form the mechanistic basis for DNA recombination by continuous HJ branch migration. Branch migration allows RuvC to scan DNA until it finds its consensus sequence, where it cleaves and resolves cruciform DNA. This is Holliday junction branch migration complex subunit RuvB from Thiobacillus denitrificans (strain ATCC 25259 / T1).